The sequence spans 605 residues: Elongation factor 4 (605 aa).

Residues 11-193 form the tr-type G domain; sequence KRIRNFSIIA…QIVTRISPPQ (183 aa). Residues 23 to 28 and 140 to 143 contribute to the GTP site; these read DHGKST and NKVD.

The protein belongs to the TRAFAC class translation factor GTPase superfamily. Classic translation factor GTPase family. LepA subfamily.

It is found in the cell membrane. It carries out the reaction GTP + H2O = GDP + phosphate + H(+). Functionally, required for accurate and efficient protein synthesis under certain stress conditions. May act as a fidelity factor of the translation reaction, by catalyzing a one-codon backward translocation of tRNAs on improperly translocated ribosomes. Back-translocation proceeds from a post-translocation (POST) complex to a pre-translocation (PRE) complex, thus giving elongation factor G a second chance to translocate the tRNAs correctly. Binds to ribosomes in a GTP-dependent manner. The chain is Elongation factor 4 from Onion yellows phytoplasma (strain OY-M).